The following is a 174-amino-acid chain: Secretion monitor (174 aa).

The first 35 residues, 1 to 35, serve as a signal peptide directing secretion; sequence MGILNLWRQFGRRYFWSHLLLGVVAASIGAPTILA.

It belongs to the SecM family.

It is found in the cytoplasm. Its subcellular location is the cytosol. It localises to the periplasm. Functionally, regulates secA expression by translational coupling of the secM secA operon. Translational pausing at a specific Pro residue 5 residues before the end of the protein may allow disruption of a mRNA repressor helix that normally suppresses secA translation initiation. The polypeptide is Secretion monitor (Photorhabdus laumondii subsp. laumondii (strain DSM 15139 / CIP 105565 / TT01) (Photorhabdus luminescens subsp. laumondii)).